A 348-amino-acid chain; its full sequence is High mobility group protein 20A (348 aa).

2 disordered regions span residues 1–114 (MENL…YVRF) and 181–213 (SRKA…DTKE). 2 stretches are compositionally biased toward polar residues: residues 34-47 (SESS…QPVN) and 56-71 (SQVQ…TAEN). The segment covering 72–82 (TEQKPEEEQQR) has biased composition (basic and acidic residues). The span at 83–97 (TKRGGWAKGRKRKKP) shows a compositional bias: basic residues. Residues 104 to 172 (PKSPLTGYVR…RYMRELEQYQ (69 aa)) constitute a DNA-binding region (HMG box). The segment covering 183 to 213 (KAQDRQKGKLHRQDGARQPVHDHEKEADTKE) has biased composition (basic and acidic residues). A coiled-coil region spans residues 230 to 274 (SKAREAELRQLRKSNMEFEERNAALQKHVESMRTAVEKLEVDVIQ).

Its subcellular location is the nucleus. Functionally, plays a role in neuronal differentiation. In Gallus gallus (Chicken), this protein is High mobility group protein 20A (HMG20A).